The following is a 96-amino-acid chain: Conantokin Rl-B (96 aa).

The first 21 residues, 1-21, serve as a signal peptide directing secretion; it reads MQLYTYLYLLVPLVTFHLILG. A propeptide spanning residues 22 to 78 is cleaved from the precursor; sequence TGTLDHGDALTERRSTDATALKPEPVLLQKSSARSTNDNGKDTQMKRILKKRGNKAR. Residues 51–96 form a disordered region; the sequence is KSSARSTNDNGKDTQMKRILKKRGNKARGEEELAEKAPEFARELAN. Residues 77-96 show a composition bias toward basic and acidic residues; sequence ARGEEELAEKAPEFARELAN. Glu-81 lines the a divalent metal cation pocket. A 4-carboxyglutamate mark is found at Glu-81, Glu-82, and Glu-85. Glu-85 contributes to the a divalent metal cation binding site. Pro-88 carries the post-translational modification 4-hydroxyproline. A divalent metal cation contacts are provided by Glu-89 and Glu-93. 4-carboxyglutamate occurs at positions 89 and 93. Asn-96 bears the Asparagine amide mark.

It belongs to the conotoxin B superfamily. It depends on Ca(2+) as a cofactor. Mg(2+) is required as a cofactor. Post-translationally, hydroxylation of Pro-88 is important for NR2B/GRIN2B NMDA receptor selectivity. Removal of hydroxylation does not change global NMDA receptor antagonism (tested on WT neurons), but it decreases the inhibitory potency on NR2B/GRIN2B NMDA receptors and increases the inhibitory potency on NR2A/GRIN2A NMDA receptors. Hydroxylation of Pro-88 locally disrupts a small region of the divalent cation-induced alpha-helix but does not destabilize the entire helix. In terms of tissue distribution, expressed by the venom duct.

It localises to the secreted. Its function is as follows. Conantokins inhibit N-methyl-D-aspartate (NMDA) receptors. This toxin has antagonist activity on the NR2B/GRIN2B subunit (IC(50)=0.1 uM). In vivo, when delivered into the brain, is active has anticonvulsant activity in the model of epilepsy in mice. The polypeptide is Conantokin Rl-B (Conus rolani (Cone snail)).